The following is a 711-amino-acid chain: Quinolinate synthase, chloroplastic (711 aa).

The transit peptide at 1–41 directs the protein to the chloroplast; it reads MDVSSLAAAAPSLVAPPLHHKPHLAFPPHHPSPARGSIGVR. Residues 17–63 are disordered; the sequence is PLHHKPHLAFPPHHPSPARGSIGVRCAHSPSPHPLRPSAATADEEVS. C114 functions as the Cysteine persulfide intermediate in the catalytic mechanism. Positions 263 and 289 each coordinate iminosuccinate. C343 lines the [4Fe-4S] cluster pocket. Residues 372-374 and S394 each bind iminosuccinate; that span reads YIN. Residue C467 participates in [4Fe-4S] cluster binding. Iminosuccinate is bound by residues 493–495 and T518; that span reads HFE. Position 631 (C631) interacts with [4Fe-4S] cluster.

It belongs to the quinolinate synthase family. Type 1 subfamily. Homodimer. The cofactor is [4Fe-4S] cluster.

It localises to the plastid. It is found in the chloroplast. It catalyses the reaction iminosuccinate + dihydroxyacetone phosphate = quinolinate + phosphate + 2 H2O + H(+). It functions in the pathway cofactor biosynthesis; NAD(+) biosynthesis; quinolinate from iminoaspartate: step 1/1. Catalyzes the condensation of iminoaspartate with dihydroxyacetone phosphate to form quinolinate. The sequence is that of Quinolinate synthase, chloroplastic from Oryza sativa subsp. japonica (Rice).